The following is a 274-amino-acid chain: Penicillin-insensitive murein endopeptidase (274 aa).

The N-terminal stretch at 1–19 is a signal peptide; it reads MKKTALALLALLVSSASLA. Intrachain disulfides connect Cys44–Cys265, Cys187–Cys235, and Cys216–Cys223. Zn(2+) contacts are provided by His110, His113, Asp120, Asp147, His150, and His211. The interval 225–274 is disordered; it reads DQPLPPPGDGCGAELQSWFEPPEPGTTKPEKKTPPPLPPSCQALLDEHVL.

The protein belongs to the peptidase M74 family. In terms of assembly, dimer. It depends on Zn(2+) as a cofactor.

It localises to the periplasm. Its function is as follows. Murein endopeptidase that cleaves the D-alanyl-meso-2,6-diamino-pimelyl amide bond that connects peptidoglycan strands. Likely plays a role in the removal of murein from the sacculus. This chain is Penicillin-insensitive murein endopeptidase, found in Citrobacter koseri (strain ATCC BAA-895 / CDC 4225-83 / SGSC4696).